We begin with the raw amino-acid sequence, 193 residues long: Peptidyl-tRNA hydrolase (193 aa).

Y17 lines the tRNA pocket. H22 (proton acceptor) is an active-site residue. Residues F68, N70, and N116 each coordinate tRNA.

Belongs to the PTH family. As to quaternary structure, monomer.

Its subcellular location is the cytoplasm. It carries out the reaction an N-acyl-L-alpha-aminoacyl-tRNA + H2O = an N-acyl-L-amino acid + a tRNA + H(+). Functionally, hydrolyzes ribosome-free peptidyl-tRNAs (with 1 or more amino acids incorporated), which drop off the ribosome during protein synthesis, or as a result of ribosome stalling. In terms of biological role, catalyzes the release of premature peptidyl moieties from peptidyl-tRNA molecules trapped in stalled 50S ribosomal subunits, and thus maintains levels of free tRNAs and 50S ribosomes. The polypeptide is Peptidyl-tRNA hydrolase (Acinetobacter baylyi (strain ATCC 33305 / BD413 / ADP1)).